A 172-amino-acid chain; its full sequence is RNA silencing suppressor p19 (172 aa).

The segment at 153-172 (EGNVSRGSPEGTEAFKEESE) is disordered.

This sequence belongs to the tombusvirus protein p19 family. In terms of assembly, homodimer.

Viral suppressor of RNA silencing which binds specifically to silencing RNAs (siRNAs). Acts as a molecular caliper to specifically select siRNAs based on the length of the duplex region of the RNA. The protein is RNA silencing suppressor p19 of Pear latent virus (PeLV).